A 187-amino-acid polypeptide reads, in one-letter code: Peptide deformylase 1 (187 aa).

Fe cation is bound by residues C107 and H149. The active site involves E150. H153 provides a ligand contact to Fe cation.

This sequence belongs to the polypeptide deformylase family. Fe(2+) is required as a cofactor.

The enzyme catalyses N-terminal N-formyl-L-methionyl-[peptide] + H2O = N-terminal L-methionyl-[peptide] + formate. Functionally, removes the formyl group from the N-terminal Met of newly synthesized proteins. Requires at least a dipeptide for an efficient rate of reaction. N-terminal L-methionine is a prerequisite for activity but the enzyme has broad specificity at other positions. The chain is Peptide deformylase 1 from Nostoc sp. (strain PCC 7120 / SAG 25.82 / UTEX 2576).